The chain runs to 350 residues: Cobalt-precorrin-5B C(1)-methyltransferase (350 aa).

Belongs to the CbiD family.

The enzyme catalyses Co-precorrin-5B + S-adenosyl-L-methionine = Co-precorrin-6A + S-adenosyl-L-homocysteine. It functions in the pathway cofactor biosynthesis; adenosylcobalamin biosynthesis; cob(II)yrinate a,c-diamide from sirohydrochlorin (anaerobic route): step 6/10. Catalyzes the methylation of C-1 in cobalt-precorrin-5B to form cobalt-precorrin-6A. The protein is Cobalt-precorrin-5B C(1)-methyltransferase of Sulfurisphaera tokodaii (strain DSM 16993 / JCM 10545 / NBRC 100140 / 7) (Sulfolobus tokodaii).